We begin with the raw amino-acid sequence, 78 residues long: U-scoloptoxin(13)-Er1a (78 aa).

Positions 1 to 24 are cleaved as a signal peptide; that stretch reads MFPSWSTTFVLCMGLCSLMNGALA.

This sequence belongs to the scoloptoxin-13 family. Post-translationally, contains 4 disulfide bonds. Expressed by the venom gland.

It is found in the secreted. The chain is U-scoloptoxin(13)-Er1a from Ethmostigmus rubripes (Giant centipede).